The chain runs to 130 residues: MSMQDPISDMLTRVRNGQAANKVAVKMPSSKLKVAIAALLKAEGYIVDFAVEGEAKPELEVTLKYFQAKPVIEQLKRVSRPGLRVYKKKDELPSVMGGLGIAIVSTSKGLMSDRAARKAGLGGEIICYVA.

The protein belongs to the universal ribosomal protein uS8 family. In terms of assembly, part of the 30S ribosomal subunit. Contacts proteins S5 and S12.

In terms of biological role, one of the primary rRNA binding proteins, it binds directly to 16S rRNA central domain where it helps coordinate assembly of the platform of the 30S subunit. This Vibrio parahaemolyticus serotype O3:K6 (strain RIMD 2210633) protein is Small ribosomal subunit protein uS8.